The sequence spans 51 residues: Large ribosomal subunit protein bL33 (51 aa).

The interval 1-20 (MRDKIRLNSSAGTGHFYTTD) is disordered.

It belongs to the bacterial ribosomal protein bL33 family.

The chain is Large ribosomal subunit protein bL33 from Psychromonas ingrahamii (strain DSM 17664 / CCUG 51855 / 37).